A 306-amino-acid chain; its full sequence is Galactosylgalactosylxylosylprotein 3-beta-glucuronosyltransferase I (306 aa).

At M1 to V11 the chain is on the cytoplasmic side. A helical; Signal-anchor for type II membrane protein transmembrane segment spans residues L12 to G29. The Lumenal segment spans residues K30 to V306. A glycan (N-linked (GlcNAc...) asparagine) is linked at N90. Mn(2+) is bound at residue D163. E252 serves as the catalytic Proton acceptor.

This sequence belongs to the glycosyltransferase 43 family. It depends on Mn(2+) as a cofactor.

It is found in the golgi apparatus membrane. The catalysed reaction is 3-O-(beta-D-galactosyl-(1-&gt;3)-beta-D-galactosyl-(1-&gt;4)-beta-D-xylosyl)-L-seryl-[protein] + UDP-alpha-D-glucuronate = 3-O-(beta-D-GlcA-(1-&gt;3)-beta-D-Gal-(1-&gt;3)-beta-D-Gal-(1-&gt;4)-beta-D-Xyl)-L-seryl-[protein] + UDP + H(+). It participates in protein modification; protein glycosylation. Functionally, involved in the biosynthesis of L2/HNK-1 carbohydrate epitope on both glycolipids and glycoproteins. Shows strict specificity for Gal-beta-1,3-Gal-beta-1,4-Xyl, exhibiting negligible incorporation into other galactoside substrates. The chain is Galactosylgalactosylxylosylprotein 3-beta-glucuronosyltransferase I (GlcAT-I) from Drosophila melanogaster (Fruit fly).